A 211-amino-acid polypeptide reads, in one-letter code: Thymidylate kinase (211 aa).

10–17 is a binding site for ATP; that stretch reads GIDGSGKT.

Belongs to the thymidylate kinase family.

The enzyme catalyses dTMP + ATP = dTDP + ADP. Its function is as follows. Phosphorylation of dTMP to form dTDP in both de novo and salvage pathways of dTTP synthesis. In Prochlorococcus marinus (strain NATL1A), this protein is Thymidylate kinase.